A 410-amino-acid chain; its full sequence is Probable tRNA sulfurtransferase (410 aa).

Residues 58–167 enclose the THUMP domain; the sequence is AELTRRLQEV…RREIFVSVER (110 aa). Residues 185 to 186, 210 to 211, arginine 267, glycine 289, and glutamine 298 contribute to the ATP site; these read LL and HF.

This sequence belongs to the ThiI family.

The protein localises to the cytoplasm. It carries out the reaction [ThiI sulfur-carrier protein]-S-sulfanyl-L-cysteine + a uridine in tRNA + 2 reduced [2Fe-2S]-[ferredoxin] + ATP + H(+) = [ThiI sulfur-carrier protein]-L-cysteine + a 4-thiouridine in tRNA + 2 oxidized [2Fe-2S]-[ferredoxin] + AMP + diphosphate. The enzyme catalyses [ThiS sulfur-carrier protein]-C-terminal Gly-Gly-AMP + S-sulfanyl-L-cysteinyl-[cysteine desulfurase] + AH2 = [ThiS sulfur-carrier protein]-C-terminal-Gly-aminoethanethioate + L-cysteinyl-[cysteine desulfurase] + A + AMP + 2 H(+). It participates in cofactor biosynthesis; thiamine diphosphate biosynthesis. Catalyzes the ATP-dependent transfer of a sulfur to tRNA to produce 4-thiouridine in position 8 of tRNAs, which functions as a near-UV photosensor. Also catalyzes the transfer of sulfur to the sulfur carrier protein ThiS, forming ThiS-thiocarboxylate. This is a step in the synthesis of thiazole, in the thiamine biosynthesis pathway. The sulfur is donated as persulfide by IscS. The protein is Probable tRNA sulfurtransferase of Nocardia farcinica (strain IFM 10152).